Reading from the N-terminus, the 72-residue chain is Gas vesicle protein A (72 aa).

It belongs to the gas vesicle GvpA family. The gas vesicle shell is 2 nm thick and consists of a single layer of this protein. It forms helical ribs nearly perpendicular to the long axis of the vesicle.

It is found in the gas vesicle shell. Functionally, gas vesicles are hollow, gas filled proteinaceous nanostructures found in some microorganisms. During planktonic growth they allow positioning of the organism at a favorable depth for light or nutrient acquisition. GvpA forms the protein shell. This chain is Gas vesicle protein A, found in Synechococcus sp. (strain JA-3-3Ab) (Cyanobacteria bacterium Yellowstone A-Prime).